The following is a 210-amino-acid chain: MLAHMPAARTFLQHPDPLTREIAEGYAGGSFLMDNGDGLRWYGVPGRALVPLTEDAGLHVARRMRRELKHFRPSVDLAFDEVIAGCRGHLPGSPERDGEWISDELVEIYQHLHTTGLAHSFEVWQGDELAGGVLGLALGGAFIAESKFHRLTNGSKAALIHLAEHLDRQGFALLDAQIQNPHLATLGVYEVTDKEYRRLLRRALALDVEL.

Belongs to the L/F-transferase family.

It localises to the cytoplasm. It catalyses the reaction N-terminal L-lysyl-[protein] + L-leucyl-tRNA(Leu) = N-terminal L-leucyl-L-lysyl-[protein] + tRNA(Leu) + H(+). It carries out the reaction N-terminal L-arginyl-[protein] + L-leucyl-tRNA(Leu) = N-terminal L-leucyl-L-arginyl-[protein] + tRNA(Leu) + H(+). The enzyme catalyses L-phenylalanyl-tRNA(Phe) + an N-terminal L-alpha-aminoacyl-[protein] = an N-terminal L-phenylalanyl-L-alpha-aminoacyl-[protein] + tRNA(Phe). Functions in the N-end rule pathway of protein degradation where it conjugates Leu, Phe and, less efficiently, Met from aminoacyl-tRNAs to the N-termini of proteins containing an N-terminal arginine or lysine. The protein is Leucyl/phenylalanyl-tRNA--protein transferase of Deinococcus radiodurans (strain ATCC 13939 / DSM 20539 / JCM 16871 / CCUG 27074 / LMG 4051 / NBRC 15346 / NCIMB 9279 / VKM B-1422 / R1).